The primary structure comprises 325 residues: Bifunctional ligase/repressor BirA (325 aa).

The H-T-H motif DNA-binding region spans 23-42 (GQKISDALGCSRTAVWKHIE). The region spanning 74–262 (RFGLKTEVMG…CFEKRYRDYM (189 aa)) is the BPL/LPL catalytic domain. Residues glutamine 118, 122-124 (RGR), and lysine 189 each bind biotin.

The protein belongs to the biotin--protein ligase family.

It carries out the reaction biotin + L-lysyl-[protein] + ATP = N(6)-biotinyl-L-lysyl-[protein] + AMP + diphosphate + H(+). Functionally, acts both as a biotin--[acetyl-CoA-carboxylase] ligase and a repressor. In Bacillus spizizenii (strain ATCC 23059 / NRRL B-14472 / W23) (Bacillus subtilis subsp. spizizenii), this protein is Bifunctional ligase/repressor BirA.